We begin with the raw amino-acid sequence, 426 residues long: Torsin-4A (426 aa).

The disordered stretch occupies residues 41-60 (QPGTEPDSGTGTLGPTGSLG). Residues 48 to 60 (SGTGTLGPTGSLG) show a composition bias toward low complexity. Ser-58 and Ser-76 each carry phosphoserine. A Phosphothreonine modification is found at Thr-84. Phosphoserine is present on Ser-101. Residues 117–133 (CLLLLVAIVGFQVLNAI) traverse the membrane as a helical segment. 189–196 (GPSGVGKS) contributes to the ATP binding site.

Belongs to the ClpA/ClpB family. Torsin subfamily.

The protein resides in the membrane. The sequence is that of Torsin-4A (Tor4a) from Mus musculus (Mouse).